Reading from the N-terminus, the 471-residue chain is UDP-N-acetylmuramoylalanine--D-glutamate ligase (471 aa).

Residue 120-126 (GSNGKTT) coordinates ATP.

Belongs to the MurCDEF family.

The protein localises to the cytoplasm. It carries out the reaction UDP-N-acetyl-alpha-D-muramoyl-L-alanine + D-glutamate + ATP = UDP-N-acetyl-alpha-D-muramoyl-L-alanyl-D-glutamate + ADP + phosphate + H(+). It functions in the pathway cell wall biogenesis; peptidoglycan biosynthesis. Functionally, cell wall formation. Catalyzes the addition of glutamate to the nucleotide precursor UDP-N-acetylmuramoyl-L-alanine (UMA). The polypeptide is UDP-N-acetylmuramoylalanine--D-glutamate ligase (Nitrosomonas europaea (strain ATCC 19718 / CIP 103999 / KCTC 2705 / NBRC 14298)).